The chain runs to 207 residues: Large ribosomal subunit protein uL4 (207 aa).

Positions 49-78 are disordered; it reads HAVKNRSAVSGGGRKPWRQKGTGRARQGSI.

Belongs to the universal ribosomal protein uL4 family. As to quaternary structure, part of the 50S ribosomal subunit.

Functionally, one of the primary rRNA binding proteins, this protein initially binds near the 5'-end of the 23S rRNA. It is important during the early stages of 50S assembly. It makes multiple contacts with different domains of the 23S rRNA in the assembled 50S subunit and ribosome. Its function is as follows. Forms part of the polypeptide exit tunnel. In Streptococcus suis (strain 98HAH33), this protein is Large ribosomal subunit protein uL4.